Here is a 371-residue protein sequence, read N- to C-terminus: DNA primase large subunit PriL (371 aa).

4 residues coordinate [4Fe-4S] cluster: Cys230, Cys301, Cys310, and Cys317. The tract at residues 337–371 (EREKEEGKEKGNEEKKEKREEHEKKNEKGNEIKEK) is disordered.

Belongs to the eukaryotic-type primase large subunit family. Heterodimer of a small subunit (PriS) and a large subunit (PriL). [4Fe-4S] cluster is required as a cofactor.

In terms of biological role, regulatory subunit of DNA primase, an RNA polymerase that catalyzes the synthesis of short RNA molecules used as primers for DNA polymerase during DNA replication. Stabilizes and modulates the activity of the small subunit, increasing the rate of DNA synthesis, and conferring RNA synthesis capability. The DNA polymerase activity may enable DNA primase to also catalyze primer extension after primer synthesis. May also play a role in DNA repair. The chain is DNA primase large subunit PriL from Methanosarcina acetivorans (strain ATCC 35395 / DSM 2834 / JCM 12185 / C2A).